Reading from the N-terminus, the 418-residue chain is Pyrophosphate--fructose 6-phosphate 1-phosphotransferase (418 aa).

Gly-13 contributes to the diphosphate binding site. A Mg(2+)-binding site is contributed by Asn-111. Residues 139-141 (TID), 187-189 (MGR), Glu-244, and 295-298 (YLQR) contribute to the substrate site. Asp-141 (proton acceptor) is an active-site residue.

Belongs to the phosphofructokinase type A (PFKA) family. PPi-dependent PFK group II subfamily. Clade 'B2' sub-subfamily. Homodimer. Mg(2+) is required as a cofactor.

It localises to the cytoplasm. It carries out the reaction beta-D-fructose 6-phosphate + diphosphate = beta-D-fructose 1,6-bisphosphate + phosphate + H(+). Its pathway is carbohydrate degradation; glycolysis; D-glyceraldehyde 3-phosphate and glycerone phosphate from D-glucose: step 3/4. Non-allosteric. Its function is as follows. Catalyzes the phosphorylation of D-fructose 6-phosphate, the first committing step of glycolysis. Uses inorganic phosphate (PPi) as phosphoryl donor instead of ATP like common ATP-dependent phosphofructokinases (ATP-PFKs), which renders the reaction reversible, and can thus function both in glycolysis and gluconeogenesis. Consistently, PPi-PFK can replace the enzymes of both the forward (ATP-PFK) and reverse (fructose-bisphosphatase (FBPase)) reactions. The sequence is that of Pyrophosphate--fructose 6-phosphate 1-phosphotransferase from Xanthomonas campestris pv. campestris (strain B100).